Here is a 479-residue protein sequence, read N- to C-terminus: Variant surface glycoprotein ILTAT 1.22 (479 aa).

An N-terminal signal peptide occupies residues 1-12 (MDTAQVFALFYM). N-linked (GlcNAc...) asparagine glycosylation is found at asparagine 120 and asparagine 458. A lipid anchor (GPI-anchor amidated asparagine) is attached at asparagine 462. A propeptide spans 463 to 479 (NSFAIKTSTLLLAVLLF) (removed in mature form).

Its subcellular location is the cell membrane. In terms of biological role, VSG forms a coat on the surface of the parasite. The trypanosome evades the immune response of the host by expressing a series of antigenically distinct VSGs from an estimated 1000 VSG genes. The protein is Variant surface glycoprotein ILTAT 1.22 of Trypanosoma brucei brucei.